A 93-amino-acid polypeptide reads, in one-letter code: Small ribosomal subunit protein uS19 (93 aa).

This sequence belongs to the universal ribosomal protein uS19 family.

Protein S19 forms a complex with S13 that binds strongly to the 16S ribosomal RNA. The sequence is that of Small ribosomal subunit protein uS19 from Clavibacter michiganensis subsp. michiganensis (strain NCPPB 382).